The following is a 604-amino-acid chain: Glutamine--fructose-6-phosphate aminotransferase [isomerizing] (604 aa).

Cys2 serves as the catalytic Nucleophile; for GATase activity. In terms of domain architecture, Glutamine amidotransferase type-2 spans 2 to 219 (CGIMGAVSER…EGDSACVTTQ (218 aa)). 2 consecutive SIS domains span residues 279–427 (LRAS…DNRA) and 454–594 (LASL…VDQP). Residue Lys599 is the For Fru-6P isomerization activity of the active site.

In terms of assembly, homodimer.

It is found in the cytoplasm. It carries out the reaction D-fructose 6-phosphate + L-glutamine = D-glucosamine 6-phosphate + L-glutamate. In terms of biological role, catalyzes the first step in hexosamine metabolism, converting fructose-6P into glucosamine-6P using glutamine as a nitrogen source. The chain is Glutamine--fructose-6-phosphate aminotransferase [isomerizing] from Legionella pneumophila (strain Lens).